A 146-amino-acid polypeptide reads, in one-letter code: UPF0260 protein Swoo_2117 (146 aa).

It belongs to the UPF0260 family.

The sequence is that of UPF0260 protein Swoo_2117 from Shewanella woodyi (strain ATCC 51908 / MS32).